Consider the following 231-residue polypeptide: Ribose-5-phosphate isomerase A (231 aa).

Residues 32–35 (TGST), 85–88 (DGAD), and 98–101 (KGGG) each bind substrate. E107 serves as the catalytic Proton acceptor. K125 provides a ligand contact to substrate.

The protein belongs to the ribose 5-phosphate isomerase family. In terms of assembly, homodimer.

The enzyme catalyses aldehydo-D-ribose 5-phosphate = D-ribulose 5-phosphate. The protein operates within carbohydrate degradation; pentose phosphate pathway; D-ribose 5-phosphate from D-ribulose 5-phosphate (non-oxidative stage): step 1/1. Its function is as follows. Catalyzes the reversible conversion of ribose-5-phosphate to ribulose 5-phosphate. This chain is Ribose-5-phosphate isomerase A, found in Paraburkholderia phymatum (strain DSM 17167 / CIP 108236 / LMG 21445 / STM815) (Burkholderia phymatum).